Here is a 209-residue protein sequence, read N- to C-terminus: Glycine cleavage system H-like protein gcvH4 (209 aa).

Residues 35 to 51 show a composition bias toward low complexity; sequence NNNNNNNNNNNNNNNNN. The interval 35-56 is disordered; sequence NNNNNNNNNNNNNNNNNRNKKL. One can recognise a Lipoyl-binding domain in the interval 73–159; that stretch reads FATIGITNYV…KTTTTTTKIK (87 aa).

Belongs to the GcvH family.

The sequence is that of Glycine cleavage system H-like protein gcvH4 (gcvH4) from Dictyostelium discoideum (Social amoeba).